Here is a 338-residue protein sequence, read N- to C-terminus: Biotin synthase (338 aa).

Residues 63–290 form the Radical SAM core domain; sequence NGVQLSTLLS…RAKVRLSAGR (228 aa). 3 residues coordinate [4Fe-4S] cluster: Cys78, Cys82, and Cys85. [2Fe-2S] cluster-binding residues include Cys122, Cys153, Cys213, and Arg285.

The protein belongs to the radical SAM superfamily. Biotin synthase family. In terms of assembly, homodimer. Requires [4Fe-4S] cluster as cofactor. The cofactor is [2Fe-2S] cluster.

It carries out the reaction (4R,5S)-dethiobiotin + (sulfur carrier)-SH + 2 reduced [2Fe-2S]-[ferredoxin] + 2 S-adenosyl-L-methionine = (sulfur carrier)-H + biotin + 2 5'-deoxyadenosine + 2 L-methionine + 2 oxidized [2Fe-2S]-[ferredoxin]. Its pathway is cofactor biosynthesis; biotin biosynthesis; biotin from 7,8-diaminononanoate: step 2/2. Its function is as follows. Catalyzes the conversion of dethiobiotin (DTB) to biotin by the insertion of a sulfur atom into dethiobiotin via a radical-based mechanism. The polypeptide is Biotin synthase (Nitrosomonas eutropha (strain DSM 101675 / C91 / Nm57)).